Reading from the N-terminus, the 132-residue chain is DNA-binding protein inhibitor ID-2 (132 aa).

One can recognise a bHLH domain in the interval 23 to 75 (ARSKTPVDDPMSLLYNMNDCYSKLKELVPSIPQNKKVSKMEILQHVIDYILDL). A Nuclear export signal motif is present at residues 105-114 (LNTDISILSL).

As to quaternary structure, heterodimer with other HLH proteins.

It is found in the cytoplasm. It localises to the nucleus. Transcriptional regulator (lacking a basic DNA binding domain) which negatively regulates the basic helix-loop-helix (bHLH) transcription factors by forming heterodimers and inhibiting their DNA binding and transcriptional activity. Inhibits the activity of both neurogenic (neurod1/neuroD) and myogenic (myod1/myoD) bHLH factors. May play a role in the regulation of the circadian clock. The protein is DNA-binding protein inhibitor ID-2 of Xenopus tropicalis (Western clawed frog).